We begin with the raw amino-acid sequence, 174 residues long: MVEPKKPFMRKPPPKTGDKKPGDRKANRRGAARLAAVQALYQMDIGGAGIDDTFAEFESHWIGNEVEGDQYLPAEAAFFRDIVSGVVRDQTKLDPLIDEALAKGWPLARIDAIIRAVMRAGAYELEHRKDIPARVVVSEYVDVAHAFVEKDETGMVNAVLDQIARQFRADEFTK.

The disordered stretch occupies residues 1–28; it reads MVEPKKPFMRKPPPKTGDKKPGDRKANR. Positions 16–25 are enriched in basic and acidic residues; that stretch reads TGDKKPGDRK.

The protein belongs to the NusB family.

Its function is as follows. Involved in transcription antitermination. Required for transcription of ribosomal RNA (rRNA) genes. Binds specifically to the boxA antiterminator sequence of the ribosomal RNA (rrn) operons. The chain is Transcription antitermination protein NusB from Rhodopseudomonas palustris (strain BisB5).